Reading from the N-terminus, the 531-residue chain is CTP synthase (531 aa).

Residues 1–267 are amidoligase domain; sequence MTKYIIITGG…ASKILSKLNL (267 aa). Ser13 is a CTP binding site. Residue Ser13 coordinates UTP. An ATP-binding site is contributed by 14-19; sequence SVGKGT. Tyr54 is a binding site for L-glutamine. Asp71 is an ATP binding site. The Mg(2+) site is built by Asp71 and Glu141. CTP-binding positions include 148 to 150, 188 to 193, and Lys224; these read DIE and KTKPLQ. UTP-binding positions include 188 to 193 and Lys224; that span reads KTKPLQ. One can recognise a Glutamine amidotransferase type-1 domain in the interval 292–531; the sequence is KIALVGKYTK…IGFLRAAAGV (240 aa). Gly355 serves as a coordination point for L-glutamine. Cys382 acts as the Nucleophile; for glutamine hydrolysis in catalysis. L-glutamine-binding positions include 383–386, Glu406, and Arg463; that span reads YGMQ. Residues His507 and Glu509 contribute to the active site.

This sequence belongs to the CTP synthase family. Homotetramer.

It carries out the reaction UTP + L-glutamine + ATP + H2O = CTP + L-glutamate + ADP + phosphate + 2 H(+). It catalyses the reaction L-glutamine + H2O = L-glutamate + NH4(+). The catalysed reaction is UTP + NH4(+) + ATP = CTP + ADP + phosphate + 2 H(+). It functions in the pathway pyrimidine metabolism; CTP biosynthesis via de novo pathway; CTP from UDP: step 2/2. Allosterically activated by GTP, when glutamine is the substrate; GTP has no effect on the reaction when ammonia is the substrate. The allosteric effector GTP functions by stabilizing the protein conformation that binds the tetrahedral intermediate(s) formed during glutamine hydrolysis. Inhibited by the product CTP, via allosteric rather than competitive inhibition. Its function is as follows. Catalyzes the ATP-dependent amination of UTP to CTP with either L-glutamine or ammonia as the source of nitrogen. Regulates intracellular CTP levels through interactions with the four ribonucleotide triphosphates. The polypeptide is CTP synthase (Sulfurisphaera tokodaii (strain DSM 16993 / JCM 10545 / NBRC 100140 / 7) (Sulfolobus tokodaii)).